The chain runs to 307 residues: Aspartate carbamoyltransferase catalytic subunit (307 aa).

The carbamoyl phosphate site is built by R54 and T55. Position 83 (K83) interacts with L-aspartate. R104, H132, and Q135 together coordinate carbamoyl phosphate. L-aspartate contacts are provided by R165 and R228. Carbamoyl phosphate is bound by residues L267 and P268.

This sequence belongs to the aspartate/ornithine carbamoyltransferase superfamily. ATCase family. Heterododecamer (2C3:3R2) of six catalytic PyrB chains organized as two trimers (C3), and six regulatory PyrI chains organized as three dimers (R2).

The enzyme catalyses carbamoyl phosphate + L-aspartate = N-carbamoyl-L-aspartate + phosphate + H(+). Its pathway is pyrimidine metabolism; UMP biosynthesis via de novo pathway; (S)-dihydroorotate from bicarbonate: step 2/3. Functionally, catalyzes the condensation of carbamoyl phosphate and aspartate to form carbamoyl aspartate and inorganic phosphate, the committed step in the de novo pyrimidine nucleotide biosynthesis pathway. The chain is Aspartate carbamoyltransferase catalytic subunit from Clostridium perfringens (strain 13 / Type A).